A 295-amino-acid polypeptide reads, in one-letter code: Porphobilinogen deaminase (295 aa).

S-(dipyrrolylmethanemethyl)cysteine is present on Cys-241.

This sequence belongs to the HMBS family. Monomer. Requires dipyrromethane as cofactor.

It catalyses the reaction 4 porphobilinogen + H2O = hydroxymethylbilane + 4 NH4(+). It participates in porphyrin-containing compound metabolism; protoporphyrin-IX biosynthesis; coproporphyrinogen-III from 5-aminolevulinate: step 2/4. Functionally, tetrapolymerization of the monopyrrole PBG into the hydroxymethylbilane pre-uroporphyrinogen in several discrete steps. The chain is Porphobilinogen deaminase from Lachnospira eligens (strain ATCC 27750 / DSM 3376 / VPI C15-48 / C15-B4) (Eubacterium eligens).